Here is a 116-residue protein sequence, read N- to C-terminus: Large ribosomal subunit protein bL20 (116 aa).

It belongs to the bacterial ribosomal protein bL20 family.

Its function is as follows. Binds directly to 23S ribosomal RNA and is necessary for the in vitro assembly process of the 50S ribosomal subunit. It is not involved in the protein synthesizing functions of that subunit. The sequence is that of Large ribosomal subunit protein bL20 from Helicobacter pylori (strain P12).